The primary structure comprises 218 residues: Adenylate kinase (218 aa).

Residue 10 to 15 coordinates ATP; that stretch reads GAGKGT. The interval 30-59 is NMP; that stretch reads STGDMLRAAVKAGTPLGLQAKAVMDSGSLV. AMP-binding positions include Thr-31, Arg-36, 57 to 59, 85 to 88, and Gln-92; these read SLV and GFPR. Positions 122–159 are LID; sequence GRRSHPASGRTYHVRFNPPKIDGKDDLTGEALLQREDD. ATP contacts are provided by residues Arg-123 and 132-133; that span reads TY. Arg-156 and Arg-167 together coordinate AMP. Gly-203 contributes to the ATP binding site.

Belongs to the adenylate kinase family. Monomer.

Its subcellular location is the cytoplasm. It catalyses the reaction AMP + ATP = 2 ADP. It functions in the pathway purine metabolism; AMP biosynthesis via salvage pathway; AMP from ADP: step 1/1. Catalyzes the reversible transfer of the terminal phosphate group between ATP and AMP. Plays an important role in cellular energy homeostasis and in adenine nucleotide metabolism. This chain is Adenylate kinase, found in Verminephrobacter eiseniae (strain EF01-2).